Here is a 118-residue protein sequence, read N- to C-terminus: Large ribosomal subunit protein bL20 (118 aa).

This sequence belongs to the bacterial ribosomal protein bL20 family.

Binds directly to 23S ribosomal RNA and is necessary for the in vitro assembly process of the 50S ribosomal subunit. It is not involved in the protein synthesizing functions of that subunit. In Campylobacter concisus (strain 13826), this protein is Large ribosomal subunit protein bL20.